Here is a 1170-residue protein sequence, read N- to C-terminus: Thrombospondin-1 (1170 aa).

The first 18 residues, 1–18, serve as a signal peptide directing secretion; it reads MGLAWGLGVLLLLHACGS. The segment at 47–95 is heparin-binding; the sequence is RLVKGPDPSSPAFRIEDANLIPPVPDKKFQDLVDAVRAEKGFLLLASLR. Positions 65–270 constitute a Laminin G-like domain; the sequence is NLIPPVPDKK…HKTKDLQAIC (206 aa). Cysteines 171 and 232 form a disulfide. Residues N248 and N360 are each glycosylated (N-linked (GlcNAc...) asparagine). The VWFC domain maps to 316–373; that stretch reads PLCYHNGVQYRTGDEWTVDSCTECRCQNSVTICKKVSCPIMPCSNATVPDGECCPRCW. TSP type-1 domains follow at residues 379 to 429, 435 to 490, and 492 to 547; these read DDGW…QECD, DGGW…DSCP, and NGGW…QDCP. Disulfide bonds link C391/C423, C395/C428, C406/C413, C447/C484, C451/C489, C462/C474, C504/C541, C508/C546, C519/C531, C551/C562, C556/C572, C575/C586, C592/C608, C599/C617, C620/C644, C650/C663, C657/C676, C678/C689, C705/C713, C718/C738, C754/C774, C777/C797, C813/C833, C836/C856, C874/C894, C910/C930, and C946/C1167. The region spanning 547 to 587 is the EGF-like 1 domain; that stretch reads PIDGCLSNPCFAGVQCTSYPDGSWKCGACPPGYSGDGVECK. Residue S553 is glycosylated (O-linked (Xyl) serine). Positions 646–690 constitute an EGF-like 2 domain; sequence PRNPCTDGTHDCNKNAKCNYLGHYSDPMYRCECKPGYAGNGIICG. TSP type-3 repeat units lie at residues 691–726, 727–762, 763–785, 786–821, 822–844, 845–882, 883–918, and 919–954; these read EDTD…NSGQ, EDYD…NPAQ, YDYD…NPDQ, ADTD…NVDQ, KDTD…NPDQ, LDSD…NANQ, ADHD…NPDQ, and KDSD…DISE. The N-linked (GlcNAc...) asparagine glycan is linked to N708. The tract at residues 839–944 is disordered; that stretch reads EHNPDQLDSD…DQDKVPDIDD (106 aa). Basic and acidic residues-rich tracts occupy residues 840–854, 883–894, and 917–941; these read HNPD…RIGD, ADHDKDGKGDAC, and DQKD…KVPD. The Cell attachment site signature appears at 926–928; it reads RGD. The TSP C-terminal domain maps to 958 to 1170; that stretch reads RRFQMIPLDP…SDLKYECRDS (213 aa). 2 N-linked (GlcNAc...) asparagine glycosylation sites follow: N1067 and N1085.

Belongs to the thrombospondin family. As to quaternary structure, homotrimer; disulfide-linked. Can bind to fibrinogen, fibronectin, laminin, type V collagen and integrins alpha-V/beta-1, alpha-V/beta-3 and alpha-IIb/beta-3. Binds heparin. Interacts (via the C-terminal domain) with CD47. Interacts (via the TSP type I repeats) with CD36; the interaction conveys an antiangiogenic effect. Interacts (via the TSP type I repeats) with HRG; the interaction blocks the antiangiogenic effect of THBS1 with CD36. Interacts with ATF6 (via lumenal domain). Interacts with FN1; this interaction is enhanced by TNFAIP6, which may act as a bridging molecule between FN1 and THBS1. Interacts with SIRPA; the interaction stimulates phosphorylation of SIRPA. As to expression, odontoblasts.

The protein resides in the secreted. It localises to the cell surface. Its subcellular location is the extracellular space. It is found in the extracellular matrix. The protein localises to the endoplasmic reticulum. The protein resides in the sarcoplasmic reticulum. Its function is as follows. Adhesive glycoprotein that mediates cell-to-cell and cell-to-matrix interactions. Multifunctional, involved in inflammation, angiogenesis, wound healing, reactive oxygen species (ROS) signaling, nitrous oxide (NO) signaling, apoptosis, senescence, aging, cellular self-renewal, stemness, and cardiovascular and metabolic homeostasis. Negatively modulates dendritic cell activation and cytokine release, as part of an autocrine feedback loop, contributing to the resolution of inflammation and immune homeostasis. Ligand for receptor CD47. Modulates nitrous oxide (NO) signaling via CD47, hence playing a role as a pressor agent, supporting blood pressure. Plays a role in endothelial cell senescence, acting via CD47, by increasing the abundance and activation of NADPH oxidase NOX1, and so generating excess ROS. Inhibits stem cell self-renewal, acting via CD47 signaling, probably by regulation of the stem cell transcription factors POU5F1/OCT4, SOX2, MYC/c-Myc and KLF4. Negatively modulates wound healing, acting via CD47. Ligand for receptor CD36. Involved in inducing apoptosis in podocytes in response to elevated free fatty acids, acting via CD36. Plays a role in suppressing angiogenesis, acting, depending on context, via CD36 or CD47. Promotes cellular senescence in a TP53-CDKN1A-RB1 signaling-dependent manner. Ligand for immunoglobulin-like cell surface receptor SIRPA. Involved in ROS signaling in non-phagocytic cells, stimulating NADPH oxidase-derived ROS production, acting via interaction with SIRPA. Plays a role in metabolic dysfunction in diet-induced obesity, perhaps acting by exacerbating adipose inflammatory activity; its effects may be mediated, at least in part, through enhanced adipocyte proliferation. Plays a role in ER stress response, via its interaction with the activating transcription factor 6 alpha (ATF6) which produces adaptive ER stress response factors. May be involved in age-related conditions, including metabolic dysregulation, during normal aging. The polypeptide is Thrombospondin-1 (THBS1) (Bos taurus (Bovine)).